Here is a 138-residue protein sequence, read N- to C-terminus: Large ribosomal subunit protein eL14B (138 aa).

Ser2 carries the post-translational modification N-acetylserine.

This sequence belongs to the eukaryotic ribosomal protein eL14 family. As to quaternary structure, component of the large ribosomal subunit (LSU). Mature yeast ribosomes consist of a small (40S) and a large (60S) subunit. The 40S small subunit contains 1 molecule of ribosomal RNA (18S rRNA) and 33 different proteins (encoded by 57 genes). The large 60S subunit contains 3 rRNA molecules (25S, 5.8S and 5S rRNA) and 46 different proteins (encoded by 81 genes). Post-translationally, N-terminally acetylated by acetyltransferase NatA.

Its subcellular location is the cytoplasm. Component of the ribosome, a large ribonucleoprotein complex responsible for the synthesis of proteins in the cell. The small ribosomal subunit (SSU) binds messenger RNAs (mRNAs) and translates the encoded message by selecting cognate aminoacyl-transfer RNA (tRNA) molecules. The large subunit (LSU) contains the ribosomal catalytic site termed the peptidyl transferase center (PTC), which catalyzes the formation of peptide bonds, thereby polymerizing the amino acids delivered by tRNAs into a polypeptide chain. The nascent polypeptides leave the ribosome through a tunnel in the LSU and interact with protein factors that function in enzymatic processing, targeting, and the membrane insertion of nascent chains at the exit of the ribosomal tunnel. In Saccharomyces cerevisiae (strain ATCC 204508 / S288c) (Baker's yeast), this protein is Large ribosomal subunit protein eL14B.